The following is a 59-amino-acid chain: UPF0391 membrane protein lpl2443 (59 aa).

2 consecutive transmembrane segments (helical) span residues 5–25 (ALIFFIIAIIAAAFGFGGIAV) and 30–50 (IAKILFFLFLVMFVIFLIMGL).

It belongs to the UPF0391 family.

The protein localises to the cell membrane. This Legionella pneumophila (strain Lens) protein is UPF0391 membrane protein lpl2443.